Consider the following 264-residue polypeptide: MQPYLDLMRHVLDNGNDKSDRTGTGTRSVFGWQMRFDLSQGFPVMTTKKLHLKSIIHELLWFIQGDTNIKYLQENGVKIWDEWADENGDLGPVYGKQWRRWETPDGRVIDQITQLVNSLKNNPDSRRHIVSAWNPGDVDNMALPPCHCLFQFYVANGKLSCQLYQRSADIFLGVPFNIASYALFTMMLAQVCGYQPGEFVHTFGDAHLYSNHFEQAKLQLSRDTRPLPTMWINPEVKDLFAFRFEDFRLEGYDPHPHIPAPVAV.

Arg-21 is a binding site for dUMP. His-51 is a (6R)-5,10-methylene-5,6,7,8-tetrahydrofolate binding site. DUMP is bound at residue 126 to 127 (RR). The Nucleophile role is filled by Cys-146. DUMP contacts are provided by residues 166-169 (RSAD), Asn-177, and 207-209 (HLY). Residue Asp-169 participates in (6R)-5,10-methylene-5,6,7,8-tetrahydrofolate binding. Ala-263 lines the (6R)-5,10-methylene-5,6,7,8-tetrahydrofolate pocket.

The protein belongs to the thymidylate synthase family. Bacterial-type ThyA subfamily. Homodimer.

It is found in the cytoplasm. It catalyses the reaction dUMP + (6R)-5,10-methylene-5,6,7,8-tetrahydrofolate = 7,8-dihydrofolate + dTMP. Its pathway is pyrimidine metabolism; dTTP biosynthesis. In terms of biological role, catalyzes the reductive methylation of 2'-deoxyuridine-5'-monophosphate (dUMP) to 2'-deoxythymidine-5'-monophosphate (dTMP) while utilizing 5,10-methylenetetrahydrofolate (mTHF) as the methyl donor and reductant in the reaction, yielding dihydrofolate (DHF) as a by-product. This enzymatic reaction provides an intracellular de novo source of dTMP, an essential precursor for DNA biosynthesis. In Dechloromonas aromatica (strain RCB), this protein is Thymidylate synthase.